The chain runs to 129 residues: D-ribose pyranase 2 (129 aa).

The active-site Proton donor is histidine 20. Substrate is bound by residues aspartate 28, histidine 96, and 118 to 120 (YAN).

This sequence belongs to the RbsD / FucU family. RbsD subfamily. In terms of assembly, homodecamer.

It localises to the cytoplasm. The catalysed reaction is beta-D-ribopyranose = beta-D-ribofuranose. Its pathway is carbohydrate metabolism; D-ribose degradation; D-ribose 5-phosphate from beta-D-ribopyranose: step 1/2. Catalyzes the interconversion of beta-pyran and beta-furan forms of D-ribose. The protein is D-ribose pyranase 2 of Streptomyces griseus subsp. griseus (strain JCM 4626 / CBS 651.72 / NBRC 13350 / KCC S-0626 / ISP 5235).